A 138-amino-acid chain; its full sequence is ATP synthase epsilon chain 2 (138 aa).

This sequence belongs to the ATPase epsilon chain family. As to quaternary structure, F-type ATPases have 2 components, CF(1) - the catalytic core - and CF(0) - the membrane proton channel. CF(1) has five subunits: alpha(3), beta(3), gamma(1), delta(1), epsilon(1). CF(0) has three main subunits: a, b and c.

The protein localises to the cell inner membrane. Functionally, produces ATP from ADP in the presence of a proton gradient across the membrane. The polypeptide is ATP synthase epsilon chain 2 (Syntrophotalea carbinolica (strain DSM 2380 / NBRC 103641 / GraBd1) (Pelobacter carbinolicus)).